Consider the following 572-residue polypeptide: Asparagine synthetase [glutamine-hydrolyzing] 1 (572 aa).

The active-site For GATase activity is Cys2. One can recognise a Glutamine amidotransferase type-2 domain in the interval 2-186; sequence CGIFAAFRHE…PGHVYDSKTD (185 aa). L-glutamine is bound by residues 49 to 53, 74 to 76, and Asp97; these read RLAIV and NGE. Residues 194-546 enclose the Asparagine synthetase domain; sequence PDWLDEKRIP…QKTVADTVMR (353 aa). An ATP-binding site is contributed by Leu233. Ser265 bears the Phosphoserine mark. Residues Ile292 and 366 to 367 contribute to the ATP site; that span reads SG. Ser509 carries the post-translational modification Phosphoserine.

The catalysed reaction is L-aspartate + L-glutamine + ATP + H2O = L-asparagine + L-glutamate + AMP + diphosphate + H(+). The protein operates within amino-acid biosynthesis; L-asparagine biosynthesis; L-asparagine from L-aspartate (L-Gln route): step 1/1. This chain is Asparagine synthetase [glutamine-hydrolyzing] 1 (ASN1), found in Saccharomyces cerevisiae (strain ATCC 204508 / S288c) (Baker's yeast).